The chain runs to 326 residues: Histone-lysine N-methyltransferase Suv4-20 (326 aa).

Residues 163–273 enclose the SET domain; the sequence is QECTRYSLEG…AGDEITCFYG (111 aa). A disordered region spans residues 294–313; sequence RGKFSTSDEEENDEPSALSE.

Belongs to the class V-like SAM-binding methyltransferase superfamily. Histone-lysine methyltransferase family. Suvar4-20 subfamily.

The protein resides in the nucleus. Its subcellular location is the chromosome. It catalyses the reaction N(6)-methyl-L-lysyl(20)-[histone H4] + S-adenosyl-L-methionine = N(6),N(6)-dimethyl-L-lysyl(20)-[histone H4] + S-adenosyl-L-homocysteine + H(+). The enzyme catalyses N(6),N(6)-dimethyl-L-lysyl(20)-[histone H4] + S-adenosyl-L-methionine = N(6),N(6),N(6)-trimethyl-L-lysyl(20)-[histone H4] + S-adenosyl-L-homocysteine + H(+). Histone methyltransferase that specifically di- and trimethylates 'Lys-20' of histone H4 (H4K20me2/me3). H4 'Lys-20' trimethylation represents a specific tag for epigenetic transcriptional repression. Contributes to dosage compensation of X chromosome-relative to autosome-linked gene expression, possibly by converting H4K20me1 to H4K20m2/me3 on autosomes. Involved in the regulation of growth and body fat metabolism downstream of the TOR complex 2 pathway. The sequence is that of Histone-lysine N-methyltransferase Suv4-20 from Caenorhabditis briggsae.